Reading from the N-terminus, the 369-residue chain is Isocitrate dehydrogenase [NAD] subunit 2, mitochondrial (369 aa).

The N-terminal 15 residues, 1–15 (MLRNTFFRNTSRRFL), are a transit peptide targeting the mitochondrion. Phosphothreonine is present on Thr105. Residues Arg119, Arg129, and Arg150 each coordinate substrate. A Phosphothreonine modification is found at Thr153. Substrate is bound at residue Asp237. Mg(2+) is bound by residues Asp237, Asp263, and Asp267. Phosphothreonine occurs at positions 327 and 349.

The protein belongs to the isocitrate and isopropylmalate dehydrogenases family. Octamer of two non-identical subunits IDH1 and IDH2. Mg(2+) serves as cofactor. It depends on Mn(2+) as a cofactor.

The protein localises to the mitochondrion matrix. The enzyme catalyses D-threo-isocitrate + NAD(+) = 2-oxoglutarate + CO2 + NADH. Its activity is regulated as follows. Allosterically regulated by several compounds including AMP, NAD(+), and citrate. In terms of biological role, performs an essential role in the oxidative function of the citric acid cycle. Also binds RNA; specifically to the 5'-untranslated leaders of mitochondrial mRNAs. In Saccharomyces cerevisiae (strain ATCC 204508 / S288c) (Baker's yeast), this protein is Isocitrate dehydrogenase [NAD] subunit 2, mitochondrial (IDH2).